The chain runs to 154 residues: Golgi-associated plant pathogenesis-related protein 1 (154 aa).

The interval 1 to 21 is disordered; sequence MGKSASKQFHNEVLKAHNEYR. G2 carries N-myristoyl glycine lipidation. The span at 9-21 shows a compositional bias: basic and acidic residues; sequence FHNEVLKAHNEYR. Residues 14–132 form the SCP domain; sequence LKAHNEYRQK…SDGSSFVVAR (119 aa). Positions 30 to 53 form a coiled coil; sequence KLCKNLNREAQQYSEALASTRILK. The interval 91–98 is interaction with CAV1; that stretch reads NFQQPGFT.

Belongs to the CRISP family. In terms of assembly, homodimer. Interacts with CAV1. As to expression, highest expression in lung and peripheral leukocytes, and minor expression in liver and kidney.

The protein localises to the golgi apparatus membrane. The polypeptide is Golgi-associated plant pathogenesis-related protein 1 (GLIPR2) (Homo sapiens (Human)).